The following is an 86-amino-acid chain: Muscarinic toxin 7 (86 aa).

The signal sequence occupies residues 1–21 (MKTLLLTLVVVTIVCLDLGYT). Finger loop stretches follow at residues 23–37 (TCVK…TSED), 44–63 (LCFK…TRGC), and 66–78 (TCPK…VINC). Intrachain disulfides connect Cys-24/Cys-45, Cys-38/Cys-63, Cys-67/Cys-78, and Cys-79/Cys-84.

It belongs to the three-finger toxin family. Short-chain subfamily. Aminergic toxin sub-subfamily. Expressed by the venom gland.

The protein resides in the secreted. Its function is as follows. Binds specifically and irreversibly to an allosteric site of the muscarinic acetylcholine M1 receptor (CHRM1) at subnanomolar concentrations and shows a very slow dissociation rate. It also inhibits agonist-mediated guanosine 5'-O-(3'-thiotriphosphate) (GTP-g-S) binding and downstream signaling, and decreases the dissociation rate of orthosteric antagonists (N-methylscopolamine (NMS) or pirenzepine). Is a potent negative allosteric modulator (NAM) for CHRM1 activation and a positive allosteric modulator (PAM) for antagonist binding. The polypeptide is Muscarinic toxin 7 (Dendroaspis angusticeps (Eastern green mamba)).